The following is a 311-amino-acid chain: Pyrimidine-specific ribonucleoside hydrolase RihA (311 aa).

Histidine 240 is a catalytic residue.

This sequence belongs to the IUNH family. RihA subfamily.

Hydrolyzes with equal efficiency cytidine or uridine to ribose and cytosine or uracil, respectively. This is Pyrimidine-specific ribonucleoside hydrolase RihA from Escherichia coli (strain ATCC 8739 / DSM 1576 / NBRC 3972 / NCIMB 8545 / WDCM 00012 / Crooks).